The following is a 961-amino-acid chain: Glycine dehydrogenase (decarboxylating) (961 aa).

K709 carries the post-translational modification N6-(pyridoxal phosphate)lysine.

It belongs to the GcvP family. As to quaternary structure, the glycine cleavage system is composed of four proteins: P, T, L and H. It depends on pyridoxal 5'-phosphate as a cofactor.

It catalyses the reaction N(6)-[(R)-lipoyl]-L-lysyl-[glycine-cleavage complex H protein] + glycine + H(+) = N(6)-[(R)-S(8)-aminomethyldihydrolipoyl]-L-lysyl-[glycine-cleavage complex H protein] + CO2. Its function is as follows. The glycine cleavage system catalyzes the degradation of glycine. The P protein binds the alpha-amino group of glycine through its pyridoxal phosphate cofactor; CO(2) is released and the remaining methylamine moiety is then transferred to the lipoamide cofactor of the H protein. The chain is Glycine dehydrogenase (decarboxylating) from Teredinibacter turnerae (strain ATCC 39867 / T7901).